The chain runs to 250 residues: MQLSFSRPRPWTLLLMVVSNLLLWENVSSGNLNSNETDGDLLLHRGLFDTATRLSQDIRDLDIEFLRMYAVNEVSEKLYNKHMLEFIEDMDFVVKALTCCHNYSIKTPENLDEAQQIPFNDFPWLILSRMWGWNETSKNLLTILRSIPGMHDDVISLAQAIERKLAELFEYTQSILTLIFGPTENVDRSIFSGLEDLKASDEELRFFALCKFSYCLRVDLQTIELYFKLLQCAVNVNSNVCLSINSEDSS.

The signal sequence occupies residues 1–29; sequence MQLSFSRPRPWTLLLMVVSNLLLWENVSS. N-linked (GlcNAc...) asparagine glycans are attached at residues asparagine 26, asparagine 35, asparagine 102, and asparagine 134. 2 cysteine pairs are disulfide-bonded: cysteine 100–cysteine 215 and cysteine 232–cysteine 241.

Belongs to the somatotropin/prolactin family. As to expression, expression restricted to placental tissues. Trophoblast giant cells are found to be the major source.

The protein resides in the secreted. The protein is Prolactin-7A2 (Prl7a2) of Rattus norvegicus (Rat).